A 387-amino-acid polypeptide reads, in one-letter code: Alanine racemase (387 aa).

Residue Lys-38 is the Proton acceptor; specific for D-alanine of the active site. Residue Lys-38 is modified to N6-(pyridoxal phosphate)lysine. A substrate-binding site is contributed by Arg-136. The active-site Proton acceptor; specific for L-alanine is the Tyr-267. A substrate-binding site is contributed by Met-315.

It belongs to the alanine racemase family. Requires pyridoxal 5'-phosphate as cofactor.

The catalysed reaction is L-alanine = D-alanine. It functions in the pathway amino-acid biosynthesis; D-alanine biosynthesis; D-alanine from L-alanine: step 1/1. Functionally, catalyzes the interconversion of L-alanine and D-alanine. May also act on other amino acids. This Clostridium novyi (strain NT) protein is Alanine racemase (alr).